The sequence spans 366 residues: Phospho-N-acetylmuramoyl-pentapeptide-transferase (366 aa).

10 helical membrane passes run 27–47, 71–91, 93–113, 138–158, 174–194, 205–225, 245–265, 268–288, 297–317, and 343–363; these read AALF…IASL, TPTM…LLWA, LSSI…AIGF, FVIA…AGAA, LMLN…VGAG, GLAI…AYLA, LAVI…FNAP, AIFM…TVAV, VIIG…VFWF, and QVVI…LSTL.

Belongs to the glycosyltransferase 4 family. MraY subfamily. Mg(2+) is required as a cofactor.

It is found in the cell inner membrane. It catalyses the reaction UDP-N-acetyl-alpha-D-muramoyl-L-alanyl-gamma-D-glutamyl-meso-2,6-diaminopimeloyl-D-alanyl-D-alanine + di-trans,octa-cis-undecaprenyl phosphate = di-trans,octa-cis-undecaprenyl diphospho-N-acetyl-alpha-D-muramoyl-L-alanyl-D-glutamyl-meso-2,6-diaminopimeloyl-D-alanyl-D-alanine + UMP. Its pathway is cell wall biogenesis; peptidoglycan biosynthesis. Catalyzes the initial step of the lipid cycle reactions in the biosynthesis of the cell wall peptidoglycan: transfers peptidoglycan precursor phospho-MurNAc-pentapeptide from UDP-MurNAc-pentapeptide onto the lipid carrier undecaprenyl phosphate, yielding undecaprenyl-pyrophosphoryl-MurNAc-pentapeptide, known as lipid I. This is Phospho-N-acetylmuramoyl-pentapeptide-transferase from Sinorhizobium medicae (strain WSM419) (Ensifer medicae).